Consider the following 425-residue polypeptide: UPF0229 protein YE2273 (425 aa).

Residues T84–E110 are disordered. Gly residues predominate over residues Q92 to D108.

The protein belongs to the UPF0229 family.

This chain is UPF0229 protein YE2273, found in Yersinia enterocolitica serotype O:8 / biotype 1B (strain NCTC 13174 / 8081).